Reading from the N-terminus, the 861-residue chain is MFSGVTGILNRGHKIKGTVVLMRKNVLDINSLTTVGGVIGQGFDILGSTVDNLTAFLGRSVSLQLISATKPDATGKGKLGKATFLEGIISSLPTLGAGQSAFKIHFEWDDDMGIPGAFYIKNFMQTEFFLVSLTLDDIPNHGSIYFVCNSWIYNAKHHKIDRIFFANQTYLPSETPAPLVHYREEELNNLRGDGTGERKEWERIYDYDVYNDLGNPDSGENHARPVLGGSETYPYPRRGRTGRKPTRKDPNSESRSDYVYLPRDEAFGHLKSSDFLTYGLKAVSQNVVPALESVFFDLNFTPNEFDSFDEVHGLYEGGIKLPTNILSQISPLPVLKEIFRTDGENTLKYPPPKVIQVSRSGWMTDEEFAREMLAGVNPNVICCLQEFPPRSKLDSQIYGDHTSKISKEHLEPNLEGLTVEEAIQNKKLFLLDHHDSIMPYLRRINSTSTKAYATRTILFLNNNQNLKPLAIELSLPHPQGDEHGAVSYVYQPALEGVESSIWLLAKAYVIVNDSCYHQLVSHWLNTHAVVEPFVIATNRHLSCLHPIYKLLYPHYRDTMNINSLARLSLVNDGGIIEKTFLWGRYSMEMSSKVYKNWVFTEQALPADLIKRGMAIEDPSSPCGVKLVVEDYPYAVDGLEIWAIIKTWVQDYVSLYYTSDEKLRQDSELQAWWKELVEVGHGDKKNEPWWPKMQTREDLIEVCSIVIWTASALHAAVNFGQYSYGGLILNRPTLSRRFMPEKGSAEFEELVKSPQKAYLKTITPKFQTLIDLSVIEILSRHASDELYLGERDNPNWTSDKRALEAFKKFGNKLAEIEKKLTQRNNDEKLRNRHGPVEMPYTLLYPSSKEGLTFRGIPNSISI.

Residues 41-166 (QGFDILGSTV…HHKIDRIFFA (126 aa)) form the PLAT domain. In terms of domain architecture, Lipoxygenase spans 169–861 (TYLPSETPAP…FRGIPNSISI (693 aa)). The disordered stretch occupies residues 215–257 (NPDSGENHARPVLGGSETYPYPRRGRTGRKPTRKDPNSESRSD). The segment covering 237-246 (RRGRTGRKPT) has biased composition (basic residues). Over residues 247 to 257 (RKDPNSESRSD) the composition is skewed to basic and acidic residues. Fe cation-binding residues include His522, His527, His713, Asn717, and Ile861.

This sequence belongs to the lipoxygenase family. The cofactor is Fe cation.

The protein resides in the cytoplasm. The enzyme catalyses (9Z,12Z)-octadecadienoate + O2 = (9S)-hydroperoxy-(10E,12Z)-octadecadienoate. It functions in the pathway lipid metabolism; oxylipin biosynthesis. Its function is as follows. Plant lipoxygenase may be involved in a number of diverse aspects of plant physiology including growth and development, pest resistance, and senescence or responses to wounding. It catalyzes the hydroperoxidation of lipids containing a cis,cis-1,4-pentadiene structure. The protein is Seed linoleate 9S-lipoxygenase-3 (LOX1.3) of Pisum sativum (Garden pea).